We begin with the raw amino-acid sequence, 431 residues long: ABSCISIC ACID-INSENSITIVE 5-like protein 7 (431 aa).

Positions 1–29 are disordered; it reads MGTHINFNNLGGGGHPGGEGSSNQMKPTG. The segment covering 10 to 20 has biased composition (gly residues); it reads LGGGGHPGGEG. Phosphoserine is present on residues Ser-39 and Ser-61. Phosphoserine; by CPK32 is present on Ser-110. Residues 133 to 153 form a disordered region; the sequence is DGNMEGSSGGGGESNVPPGRQ. Phosphothreonine is present on Thr-155. Residues 319–331 show a composition bias toward polar residues; sequence SPGTSSAENNSLS. The interval 319 to 338 is disordered; sequence SPGTSSAENNSLSPVPYVLN. The Nuclear localization signal motif lies at 340–347; that stretch reads GRRSNTGL. In terms of domain architecture, bZIP spans 351 to 414; it reads IERRQRRMIK…KNELKETSKR (64 aa). Residues 353-372 are basic motif; sequence RRQRRMIKNRESAARSRARK. A coiled-coil region spans residues 372–411; the sequence is KQAYTLELEAEIEKLKKTNQELQKKQAEMVEMQKNELKET. Residues 379 to 393 are leucine-zipper; sequence LEAEIEKLKKTNQEL.

The protein belongs to the bZIP family. ABI5 subfamily. DNA-binding heterodimer. Interacts with CPK32 and the AFP proteins AFP1, AFP2 and AFP3. Interacts with FREE1 (via C-terminus). Post-translationally, phosphorylated by CPK4 and CPK11 in vitro. As to expression, expressed in roots, leaves, flowers and immatures siliques.

Its subcellular location is the nucleus. Functionally, functions as a transcriptional activator in the ABA-inducible expression of LTI65/RD29B (AC Q04980). Binds specifically to the ABA-responsive element (ABRE) of the LTI65/RD29B (AC Q04980) gene promoter. Binds to the promoter of FREE1 and activates its transcription. The sequence is that of ABSCISIC ACID-INSENSITIVE 5-like protein 7 from Arabidopsis thaliana (Mouse-ear cress).